Consider the following 259-residue polypeptide: Ribonuclease HII (259 aa).

The RNase H type-2 domain occupies 70–258; it reads TLIAGIDEVG…VKSLVLGKKE (189 aa). Asp76, Glu77, and Asp168 together coordinate a divalent metal cation.

This sequence belongs to the RNase HII family. Mn(2+) serves as cofactor. The cofactor is Mg(2+).

The protein localises to the cytoplasm. The enzyme catalyses Endonucleolytic cleavage to 5'-phosphomonoester.. Functionally, endonuclease that specifically degrades the RNA of RNA-DNA hybrids. This is Ribonuclease HII from Streptococcus pneumoniae (strain P1031).